Here is a 106-residue protein sequence, read N- to C-terminus: ATP-dependent Clp protease adapter protein ClpS (106 aa).

This sequence belongs to the ClpS family. As to quaternary structure, binds to the N-terminal domain of the chaperone ClpA.

Functionally, involved in the modulation of the specificity of the ClpAP-mediated ATP-dependent protein degradation. In Yersinia pestis bv. Antiqua (strain Antiqua), this protein is ATP-dependent Clp protease adapter protein ClpS.